The sequence spans 330 residues: Probable WRKY transcription factor 74 (330 aa).

Residues 256–322 (KIADIPPDEY…YEGEHNHSRI (67 aa)) constitute a DNA-binding region (WRKY).

It localises to the nucleus. Transcription factor. Interacts specifically with the W box (5'-(T)TGAC[CT]-3'), a frequently occurring elicitor-responsive cis-acting element. The protein is Probable WRKY transcription factor 74 (WRKY74) of Arabidopsis thaliana (Mouse-ear cress).